The primary structure comprises 333 residues: Phosphate acyltransferase (333 aa).

This sequence belongs to the PlsX family. Homodimer. Probably interacts with PlsY.

It localises to the cytoplasm. The enzyme catalyses a fatty acyl-[ACP] + phosphate = an acyl phosphate + holo-[ACP]. It functions in the pathway lipid metabolism; phospholipid metabolism. Functionally, catalyzes the reversible formation of acyl-phosphate (acyl-PO(4)) from acyl-[acyl-carrier-protein] (acyl-ACP). This enzyme utilizes acyl-ACP as fatty acyl donor, but not acyl-CoA. This chain is Phosphate acyltransferase, found in Aliarcobacter butzleri (strain RM4018) (Arcobacter butzleri).